A 612-amino-acid chain; its full sequence is MAAVVQQNDLVFEFASNGMEDEQQLGDPAIFPAVIVEHVPGADILNSYAGLACVEEPNDMITESSLDVAEEEIIDDDDDDITLTVEASCHNGDETIETIEAAEALLNIDSPSPPVLDEKQINNNIFSSSEDDIVAPITHVSVTLDGIPEVMETQQVQETNADSPGASSPEQRKRKKGRKTKPPRPDSPTTTPNISVKKKNKDGKGNTIYLWEFLLALLQDKATCPKYIKWTQREKGIFKLVDSKAVSRLWGKHKNKPDMNYETMGRALRYYYQRGILAKVEGQRLVYQFKEMPKDLIYIDDEDPSSSIESSDQSLSSTTASSRNQANRSRVSSSPGIKGGAATILKPGNSKAANPKDPVEVGQPSEVLRTVQPSQAPYPTQLFRTVHVVQPVQAVPEEATIASTMQEEAANSSVPSIRTIQASTQVPVVVSPGNQQLHTVTVPLTTVIASIDPSSGAGSQKFILQTIPSSQPMTVLKENVMLQSQKPGSPSIVLSPTQVQQVLTSNVQSICNGAGSVASAPSFSATTPVVTFSRSSQLVAHPPGTVITSVIKAQETKTLKQEVEKKAEDDLNEDAEKSAQQPQPYVMVLSSSNGFSSQVAVKQNELLEPNSF.

A phosphoserine mark is found at Ser110, Ser163, Ser167, and Ser168. Polar residues predominate over residues 156-169 (VQETNADSPGASSP). Positions 156–199 (VQETNADSPGASSPEQRKRKKGRKTKPPRPDSPTTTPNISVKKK) are disordered. Basic residues predominate over residues 172 to 182 (RKRKKGRKTKP). The residue at position 187 (Ser187) is a Phosphoserine. Position 190 is a phosphothreonine (Thr190). The ETS DNA-binding region spans 208–290 (IYLWEFLLAL…EGQRLVYQFK (83 aa)). The segment at 300–361 (DDEDPSSSIE…AANPKDPVEV (62 aa)) is disordered. The segment covering 305-322 (SSSIESSDQSLSSTTASS) has biased composition (low complexity). The span at 323 to 335 (RNQANRSRVSSSP) shows a compositional bias: polar residues. At Ser431 the chain carries Phosphoserine. Over residues 562 to 577 (EVEKKAEDDLNEDAEK) the composition is skewed to basic and acidic residues. The interval 562-586 (EVEKKAEDDLNEDAEKSAQQPQPYV) is disordered.

The protein belongs to the ETS family. Binds to the underphosphorylated form of RB. May interact with other transcription factors in order to regulate specific genes. Interacts with RUNX1. Interacts with SP1; the interaction is inhibited by glycosylation of SP1. Predominantly found in hematopoietic cells. Detected in other cell types such as fibroblasts.

It is found in the nucleus. In terms of biological role, transcription factor that activates the LYN and BLK promoters. The protein is ETS-related transcription factor Elf-1 (Elf1) of Mus musculus (Mouse).